The sequence spans 341 residues: C2 calcium-dependent domain-containing protein 4D (341 aa).

The segment covering 56-71 (RLRDPRGAEGRVDRNP) has biased composition (basic and acidic residues). Disordered stretches follow at residues 56–75 (RLRD…GGRN) and 134–176 (CRAP…PYAP). Over residues 139-149 (SDTASSPDSSP) the composition is skewed to low complexity. In terms of domain architecture, C2 spans 205 to 331 (RGGQLRLSTE…PPLAGGLGPG (127 aa)).

This is C2 calcium-dependent domain-containing protein 4D (C2cd4d) from Mus musculus (Mouse).